Reading from the N-terminus, the 1196-residue chain is ATP-dependent helicase/deoxyribonuclease subunit B (1196 aa).

Residues C823, C1149, C1152, and C1158 each contribute to the [4Fe-4S] cluster site.

The protein belongs to the helicase family. AddB/RexB type 2 subfamily. Heterodimer of AddA and RexB. The cofactor is Mg(2+). [4Fe-4S] cluster is required as a cofactor.

Functionally, the heterodimer acts as both an ATP-dependent DNA helicase and an ATP-dependent, dual-direction single-stranded exonuclease. Recognizes the chi site generating a DNA molecule suitable for the initiation of homologous recombination. This subunit has 5' -&gt; 3' nuclease activity but not helicase activity. This Enterococcus faecalis (strain ATCC 700802 / V583) protein is ATP-dependent helicase/deoxyribonuclease subunit B.